Reading from the N-terminus, the 310-residue chain is tRNA uridine(34) hydroxylase (310 aa).

The Rhodanese domain maps to 123–217 (ADPDVVVIDV…YLEKVPEDES (95 aa)). The active-site Cysteine persulfide intermediate is Cys177.

This sequence belongs to the TrhO family.

It carries out the reaction uridine(34) in tRNA + AH2 + O2 = 5-hydroxyuridine(34) in tRNA + A + H2O. Catalyzes oxygen-dependent 5-hydroxyuridine (ho5U) modification at position 34 in tRNAs. The protein is tRNA uridine(34) hydroxylase of Acaryochloris marina (strain MBIC 11017).